A 2378-amino-acid chain; its full sequence is MPDTKDLQYSLTGAQTGIWFAQQLDPDNPIYNTAEYIEINGPVNIALFEEALRHVIKEAESLHVRFGENMDGPWQMINPSPDVQLHVIDVSSEPDPEKTALNWMKADLAKPVDLGYAPLFNEALFIAGPDRFFWYQRIHHIAIDGFGFSLIAQRVASTYTALIKGQTAKSRSFGSLQAILEEDTDYRGSEQYEKDRQFWLDRFADAPEVVSLADRAPRTSNSFLRHTAYLPPSDVNALKEAARYFSGSWHEVMIAVSAVYVHRMTGSEDVVLGLPMMGRIGSASLNVPAMVMNLLPLRLTVSSSMSFSELIQQISREIRSIRRHHKYRHEELRRDLKLIGENHRLFGPQINLMPFDYGLDFAGVRGTTHNLSAGPVDDLSINVYDRTDGSGLRIDVDANPEVYSESDIKLHQQRILQLLQTASAGEDMLIGQMELLLPEEKEKVISKWNETAKSEKLVSLQDMFEKQAVLTPERIALMCDDIQVNYRKLNEEANRLARLLIEKGIGPEQFVALALPRSPEMVASMLGVLKTGAAYLPLDPEFPADRISYMLEDAKPSCIITTEEIAASLPDDLAVPELVLDQAVTQEIIKRYSPENQDVSVSLDHPAYIIYTSGSTGRPKGVVVTQKSLSNFLLSMQEAFSLGEEDRLLAVTTVAFDISALELYLPLISGAQIVIAKKETIREPQALAQMIENFDINIMQATPTLWHALVTSEPEKLRGLRVLVGGEALPSGLLQELQDLHCSVTNLYGPTETTIWSAAAFLEEGLKGVPPIGKPIWNTQVYVLDNGLQPVPPGVVGELYIAGTGLARGYFHRPDLTAERFVADPYGPPGTRMYRTGDQARWRADGSLDYIGRADHQIKIRGFRIELGEIDAVLANHPHIEQAAVVVREDQPGDKRLAAYVVADAAIDTAELRRYMGASLPDYMVPSAFVEMDELPLTPNGKLDRKALPAPDFSTSVSDRAPRTPQEEILCDLFAEVLGLARVGIDDSFFELGGHSLLAARLMSRIREVMGAELGIAKLFDEPTVAGLAAHLDLAQSACPALQRAERPEKIPLSFAQRRLWFLHCLEGPSPTYNIPVAVRLSGELDQGLLKAALYDLVCRHESLRTIFPESQGTSYQHILDADRACPELHVTEIAEKELSDRLAEAVRYSFDLAAEPAFRAELFVIGPDEYVLLLLVHHIVGDGWSLTPLTRDLGTAYAARCHGRSPEWAPLAVQYADYALWQQELLGNEDDPNSLIAGQLAFWKETLKNLPDQLELPTDYSRPAEPSHDGDTIHFRIEPEFHKRLQELARANRVSLFMVLQSGLAALLTRLGAGTDIPIGSPIAGRNDDALGDLVGLFINTLVLRTDTSGDPSFRELLDRVREVNLAAYDNQDLPFERLVEVLNPARSRATHPLFQIMLAFQNTPDAELHLPDMESSLRINSVGSAKFDLTLEISEDRLADGTPNGMEGLLEYSTDLFKRETAQALADRLMRLLEAAESDPDEQIGNLDILAPEEHSSMVTDWQSVSEKIPHACLPEQFEKQAALRPDAIAVVYENQELSYAELNERANRLARMMISEGVGPEQFVALALPRSLEMAVGLLAVLKAGAAYLPLDPDYPADRIAFMLKDAQPAFIMTNTKAANHIPPVENVPKIVLDDPELAEKLNTYPAGNPKNKDRTQPLSPLNTAYVIYTSGSTGVPKGVMIPHQNVTRLFAATEHWFRFSSGDIWTMFHSYAFDFSVWEIWGPLLHGGRLVIVPHHVSRSPEAFLRLLVKEGVTVLNQTPSAFYQFMQAEREQPDLGQALSLRYVIFGGEALELSRLEDWYNRHPENRPQLINMYGITETTVHVSYIELDRSMAALRANSLIGCGIPDLGVYVLDERLQPVPPGVAGELYVSGAGLARGYLGRPGLTSERFIADPFGPPGTRMYRTGDVARLRADGSLDYVGRADHQVKIRGFRIELGEIEAALVQHPQLEDAAVIVREDQPGDKRLAAYVIPSEETFDTAELRRYAAERLPDYMVPAAFVTMKELPLTPNGKLDRKALPAPDFAAAVTGRGPRTPQEEILCDLFMEVLHLPRVGIDDRFFDLGGHSLLAVQLMSRIREALGVELSIGNLFEAPTVAGLAERLEMGSSQSALDVLLPLRTSGDKPPLFCVHPAGGLSWCYAGLMTNIGTDYPIYGLQARGIGQREELPKTLDDMAADYIKQIRTVQPKGPYHLLGWSLGGNVVQAMATQLQNQGEEVSLLVMLDAYPNHFLPIKEAPDDEEALIALLALGGYDPDSLGEKPLDFEAAIEILRRDGSALASLDETVILNLKNTYVNSVGILGSYKPKTFRGNVLFFRSTIIPEWFDPIEPDSWKPYINGQIEQIDIDCRHKDLCQPEPLAQIGKVLAVKLEELNK.

Carrier domains are found at residues 961–1036 and 2036–2111; these read APRT…DLAQ and GPRT…EMGS. An O-(pantetheine 4'-phosphoryl)serine mark is found at serine 996 and serine 2071.

It belongs to the ATP-dependent AMP-binding enzyme family. Requires pantetheine 4'-phosphate as cofactor.

It catalyses the reaction holo-[peptidyl-carrier protein] + L-threonine + ATP = L-threonyl-[peptidyl-carrier protein] + AMP + diphosphate. The enzyme catalyses holo-[peptidyl-carrier protein] + glycine + ATP = glycyl-[peptidyl-carrier protein] + AMP + diphosphate. Its pathway is siderophore biosynthesis; bacillibactin biosynthesis. Its function is as follows. Specifically adenylates L-threonine and, to a lesser extent, glycine and covalently loads both amino acids onto their corresponding peptidyl carrier domains. The polypeptide is Dimodular nonribosomal peptide synthase (dhbF) (Bacillus subtilis (strain 168)).